Here is a 185-residue protein sequence, read N- to C-terminus: Ribosome maturation factor RimM (185 aa).

The PRC barrel domain occupies 106–185 (TGDYYWKDLI…TIEVDWDPGF (80 aa)).

This sequence belongs to the RimM family. In terms of assembly, binds ribosomal protein uS19.

Its subcellular location is the cytoplasm. Its function is as follows. An accessory protein needed during the final step in the assembly of 30S ribosomal subunit, possibly for assembly of the head region. Essential for efficient processing of 16S rRNA. May be needed both before and after RbfA during the maturation of 16S rRNA. It has affinity for free ribosomal 30S subunits but not for 70S ribosomes. The polypeptide is Ribosome maturation factor RimM (Photorhabdus laumondii subsp. laumondii (strain DSM 15139 / CIP 105565 / TT01) (Photorhabdus luminescens subsp. laumondii)).